We begin with the raw amino-acid sequence, 462 residues long: Argininosuccinate lyase (462 aa).

Belongs to the lyase 1 family. Argininosuccinate lyase subfamily.

It localises to the cytoplasm. The enzyme catalyses 2-(N(omega)-L-arginino)succinate = fumarate + L-arginine. The protein operates within amino-acid biosynthesis; L-arginine biosynthesis; L-arginine from L-ornithine and carbamoyl phosphate: step 3/3. The chain is Argininosuccinate lyase from Streptococcus agalactiae serotype Ia (strain ATCC 27591 / A909 / CDC SS700).